The chain runs to 144 residues: 3-dehydroquinate dehydratase (144 aa).

Tyr-23 serves as the catalytic Proton acceptor. Substrate is bound by residues Asn-74, His-80, and Asp-87. His-101 functions as the Proton donor in the catalytic mechanism. Substrate-binding positions include 102–103 and Arg-112; that span reads LS.

It belongs to the type-II 3-dehydroquinase family. As to quaternary structure, homododecamer.

The enzyme catalyses 3-dehydroquinate = 3-dehydroshikimate + H2O. It functions in the pathway metabolic intermediate biosynthesis; chorismate biosynthesis; chorismate from D-erythrose 4-phosphate and phosphoenolpyruvate: step 3/7. Its function is as follows. Catalyzes a trans-dehydration via an enolate intermediate. The polypeptide is 3-dehydroquinate dehydratase (Mesorhizobium japonicum (strain LMG 29417 / CECT 9101 / MAFF 303099) (Mesorhizobium loti (strain MAFF 303099))).